A 204-amino-acid polypeptide reads, in one-letter code: Large ribosomal subunit protein uL4 (204 aa).

Residues 47 to 69 form a disordered region; it reads KAQKNRAAVSGGGKKPWRQKGTG.

Belongs to the universal ribosomal protein uL4 family. As to quaternary structure, part of the 50S ribosomal subunit.

Its function is as follows. One of the primary rRNA binding proteins, this protein initially binds near the 5'-end of the 23S rRNA. It is important during the early stages of 50S assembly. It makes multiple contacts with different domains of the 23S rRNA in the assembled 50S subunit and ribosome. Functionally, forms part of the polypeptide exit tunnel. The polypeptide is Large ribosomal subunit protein uL4 (Teredinibacter turnerae (strain ATCC 39867 / T7901)).